Consider the following 590-residue polypeptide: Aspartate--tRNA(Asp/Asn) ligase (590 aa).

Glu-175 lines the L-aspartate pocket. An aspartate region spans residues 199 to 202 (QQYK). Residues Arg-221 and His-450 each coordinate L-aspartate. 221–223 (RDE) contacts ATP. An ATP-binding site is contributed by Glu-484. Arg-491 lines the L-aspartate pocket. Position 536 to 539 (536 to 539 (GVDR)) interacts with ATP.

This sequence belongs to the class-II aminoacyl-tRNA synthetase family. Type 1 subfamily. As to quaternary structure, homodimer.

The protein resides in the cytoplasm. The enzyme catalyses tRNA(Asx) + L-aspartate + ATP = L-aspartyl-tRNA(Asx) + AMP + diphosphate. Aspartyl-tRNA synthetase with relaxed tRNA specificity since it is able to aspartylate not only its cognate tRNA(Asp) but also tRNA(Asn). Reaction proceeds in two steps: L-aspartate is first activated by ATP to form Asp-AMP and then transferred to the acceptor end of tRNA(Asp/Asn). The polypeptide is Aspartate--tRNA(Asp/Asn) ligase (Bradyrhizobium sp. (strain BTAi1 / ATCC BAA-1182)).